The primary structure comprises 428 residues: Arginine biosynthesis bifunctional protein ArgJ, mitochondrial (428 aa).

Residues Thr-171, Lys-197, Thr-208, Glu-294, Asn-423, and Ser-428 each coordinate substrate. The Nucleophile role is filled by Thr-208.

It belongs to the ArgJ family. As to quaternary structure, heterodimer of an alpha and a beta chain. In terms of processing, the alpha and beta chains are autoproteolytically processed from a single precursor protein within the mitochondrion.

It localises to the mitochondrion matrix. It catalyses the reaction N(2)-acetyl-L-ornithine + L-glutamate = N-acetyl-L-glutamate + L-ornithine. It carries out the reaction L-glutamate + acetyl-CoA = N-acetyl-L-glutamate + CoA + H(+). It participates in amino-acid biosynthesis; L-arginine biosynthesis; L-ornithine and N-acetyl-L-glutamate from L-glutamate and N(2)-acetyl-L-ornithine (cyclic): step 1/1. It functions in the pathway amino-acid biosynthesis; L-arginine biosynthesis; N(2)-acetyl-L-ornithine from L-glutamate: step 1/4. Its function is as follows. Catalyzes two activities which are involved in the cyclic version of arginine biosynthesis: the synthesis of acetylglutamate from glutamate and acetyl-CoA, and of ornithine by transacetylation between acetylornithine and glutamate. The chain is Arginine biosynthesis bifunctional protein ArgJ, mitochondrial from Komagataella phaffii (strain GS115 / ATCC 20864) (Yeast).